A 258-amino-acid polypeptide reads, in one-letter code: uncharacterized protein (258 aa).

A run of 6 helical transmembrane segments spans residues 24–44 (IPLF…VNIF), 70–90 (PLVH…FLLM), 100–120 (LCTI…AYLI), 130–150 (VYVG…LNLF), 157–177 (LLNL…VLGL), and 181–201 (FSIT…FSFA). The active site involves H188.

It belongs to the peptidase S54 family.

Its subcellular location is the golgi apparatus membrane. This is an uncharacterized protein from Schizosaccharomyces pombe (strain 972 / ATCC 24843) (Fission yeast).